An 804-amino-acid polypeptide reads, in one-letter code: Mechanosensitive cation channel TMEM63A (804 aa).

Over 1-51 the chain is Extracellular; that stretch reads MTSSPFLDPWPSKAVFVRERLGLGERPNDSYCYNSAKNSTVLQGVTFGGIP. Residue Asn38 is glycosylated (N-linked (GlcNAc...) asparagine). A helical membrane pass occupies residues 52 to 74; sequence TVLLLDVSCFLFLILVFSIIRRR. Residues 75–133 are Cytoplasmic-facing; it reads FWDYGRIALVSEAGSEARFQRLSSSSSGQQDFENELGCCPWLTAIFRLHDDQILEWCGE. The chain crosses the membrane as a helical span at residues 134–166; that stretch reads DAIHYLSFQRHIIFLLVVISFLSLCVILPVNLS. At 167–190 the chain is on the extracellular side; it reads GDLLGKDPYSFGRTTIANLQTDND. Residues 191–216 form a helical membrane-spanning segment; the sequence is LLWLHTVFSVIYLFLTVGFMWHHTRS. The Cytoplasmic portion of the chain corresponds to 217–415; the sequence is IRYKEESLVR…CWKNLSIQGV (199 aa). The intracellular linker IL2; confers mechanosensitivity stretch occupies residues 218–413; sequence RYKEESLVRQ…DICWKNLSIQ (196 aa). The chain crosses the membrane as a helical span at residues 416-443; it reads RWWLQWLGINFSLFVVLFFLTTPSIIMS. The Extracellular segment spans residues 444 to 461; it reads TMDKFNVTKPIHALNNPV. Asn449 carries N-linked (GlcNAc...) asparagine glycosylation. Residues 462–489 form a helical membrane-spanning segment; sequence ISQFFPTLLLWSFSALLPSIVYYSTLLE. Topologically, residues 490–494 are cytoplasmic; sequence SHWTR. A helical membrane pass occupies residues 495–531; the sequence is SGENRIMVSKVYIFLIFMVLILPSLGLTSLDFFFRWL. Residues 532–553 lie on the Extracellular side of the membrane; the sequence is FDKTSSETSIRLECVFLPDQGA. The helical transmembrane segment at 554-585 threads the bilayer; it reads FFVNYVIASAFIGSGMELLRLPGLILYTFRMI. A gating helix region spans residues 554 to 585; that stretch reads FFVNYVIASAFIGSGMELLRLPGLILYTFRMI. The Cytoplasmic segment spans residues 586–605; it reads MAKTAADRRNVKQNQAFEYE. A helical membrane pass occupies residues 606–623; that stretch reads FGAMYAWMLCVFTVIMAY. The Extracellular segment spans residues 624-627; the sequence is SITC. The helical transmembrane segment at 628–650 threads the bilayer; it reads PIIVPFGLIYILLKHMVDRHNLY. Topologically, residues 651–660 are cytoplasmic; it reads FAYLPAKLEK. The helical transmembrane segment at 661–688 threads the bilayer; that stretch reads RIHFAAVNQALAAPILCLFWLFFFSFLR. The Extracellular segment spans residues 689–693; that stretch reads LGLTA. A helical transmembrane segment spans residues 694–708; sequence PATLFTFLVVLLTIL. The Cytoplasmic segment spans residues 709-804; that stretch reads ACLLYTCFGC…GTAAYAYQES (96 aa). Ser738 is modified (phosphoserine).

The protein belongs to the CSC1 (TC 1.A.17) family. Monomer. In terms of processing, N-Glycosylated.

Its subcellular location is the lysosome membrane. The protein resides in the early endosome membrane. The protein localises to the cell membrane. The enzyme catalyses Ca(2+)(in) = Ca(2+)(out). Its function is as follows. Mechanosensitive cation channel with low conductance and high activation threshold. In contrast to TMEM63B, does not show phospholipid scramblase activity. Acts as a regulator of lysosomal morphology by mediating lysosomal mechanosensitivity. Important for the baby's first breath and respiration throughout life. Upon lung inflation conducts cation currents in alveolar type 1 and 2 cells triggering lamellar body exocytosis and surfactant secretion into airspace. Also acts as an osmosensitive cation channel preferentially activated by hypotonic stress. The sequence is that of Mechanosensitive cation channel TMEM63A from Mus musculus (Mouse).